A 318-amino-acid polypeptide reads, in one-letter code: MLTKEFAQRVELSEKQVRKIVQHLEERGYQLSKTEYRGREATDFKEEDIELFKDIADKVKQTNSYDLAFDELEKEKDFLQVIVKNDDKNLPTNQNVAQLVEDLRLEIQKMREERHLLGQMMNQVHQQQQELKELQNQLTSKIDSNSESLKAIQTSQEAIQEAQASQAKVLAESTNKVEKNAVTEDKADSKDSKVAGVNTSTDAKTDTKADNAGDGTTTKVDKEDQISATEAIEKASVEQSKNGNAAETSNKEATIDAEAQHDAEQQVAEAHAEASKQATSNDSLEAKAENDSTASQSEMSEPKPQEEKKGFFARLFNL.

A coiled-coil region spans residues 67–157 (LAFDELEKEK…SLKAIQTSQE (91 aa)). The disordered stretch occupies residues 172 to 318 (ESTNKVEKNA…KGFFARLFNL (147 aa)). Composition is skewed to basic and acidic residues over residues 175-193 (NKVEKNAVTEDKADSKDSK) and 219-236 (KVDKEDQISATEAIEKAS). Polar residues predominate over residues 237 to 248 (VEQSKNGNAAET). 2 stretches are compositionally biased toward basic and acidic residues: residues 249–274 (SNKEATIDAEAQHDAEQQVAEAHAEA) and 300–310 (SEPKPQEEKKG).

This is an uncharacterized protein from Staphylococcus aureus (strain MW2).